Here is a 1382-residue protein sequence, read N- to C-terminus: Hepatocyte growth factor receptor (1382 aa).

Positions 1 to 24 are cleaved as a signal peptide; that stretch reads MKAPAVLAPGVLVLLFTLVRKSHG. The Extracellular segment spans residues 25 to 935; the sequence is ECEEALAKSK…VQPDQNFTGL (911 aa). A Sema domain is found at 27–516; the sequence is EEALAKSKMN…TGKKITKIPL (490 aa). N-linked (GlcNAc...) asparagine glycosylation is present at asparagine 45. 4 disulfide bridges follow: cysteine 95-cysteine 101, cysteine 98-cysteine 160, cysteine 133-cysteine 141, and cysteine 173-cysteine 176. Asparagine 106 carries an N-linked (GlcNAc...) asparagine glycan. Residues asparagine 203 and asparagine 359 are each glycosylated (N-linked (GlcNAc...) asparagine). Intrachain disulfides connect cysteine 299–cysteine 364 and cysteine 386–cysteine 398. N-linked (GlcNAc...) asparagine glycosylation is found at asparagine 400, asparagine 406, and asparagine 450. 4 cysteine pairs are disulfide-bonded: cysteine 521–cysteine 539, cysteine 527–cysteine 562, cysteine 530–cysteine 546, and cysteine 542–cysteine 552. IPT/TIG domains are found at residues 564 to 656, 658 to 740, and 743 to 837; these read PTIY…FSYV, PVIT…FSYQ, and PTVY…LIYV. The O-linked (Man) threonine glycan is linked to threonine 583. Asparagine 608 and asparagine 636 each carry an N-linked (GlcNAc...) asparagine glycan. Threonine 677 is a glycosylation site (O-linked (Man) threonine). An N-linked (GlcNAc...) asparagine glycan is attached at asparagine 751. Residue threonine 762 is glycosylated (O-linked (Man) threonine). N-linked (GlcNAc...) asparagine glycans are attached at residues asparagine 786, asparagine 880, and asparagine 931. The chain crosses the membrane as a helical span at residues 936–956; sequence IVGVVSISIILLLLLGLFLWL. Over 957-1382 the chain is Cytoplasmic; it reads KKRKQIKDLG…QDSVDDEVDT (426 aa). Serine 967 carries the phosphoserine modification. A Phosphothreonine modification is found at threonine 978. A phosphoserine mark is found at serine 991, serine 998, and serine 1001. Tyrosine 1004 is subject to Phosphotyrosine. The Protein kinase domain occupies 1079–1346; it reads VHFNEVIGRG…RISAIFSTFI (268 aa). ATP is bound by residues 1085–1093 and lysine 1111; that span reads IGRGHFGCV. The active-site Proton acceptor is aspartate 1205. An interaction with RANBP9 region spans residues 1213–1382; it reads LDEKFTVKVA…QDSVDDEVDT (170 aa). Residue tyrosine 1231 is modified to Phosphotyrosine. Residues tyrosine 1235 and tyrosine 1236 each carry the phosphotyrosine; by autocatalysis modification. Position 1290 is a phosphothreonine (threonine 1290). An interaction with MUC20 region spans residues 1321–1360; sequence WHPKAEMRPSFSELVSRISAIFSTFIGEHYVHVNTTYVNV. Residues tyrosine 1350 and tyrosine 1357 each carry the phosphotyrosine; by autocatalysis modification. Tyrosine 1366 carries the post-translational modification Phosphotyrosine.

This sequence belongs to the protein kinase superfamily. Tyr protein kinase family. As to quaternary structure, heterodimer made of an alpha chain (50 kDa) and a beta chain (145 kDa) which are disulfide linked. Binds PLXNB1. Interacts when phosphorylated with downstream effectors including STAT3, PIK3R1, SRC, PCLG1, GRB2 and GAB1. Interacts with SPSB1, SPSB2 and SPSB4. Interacts with INPP5D/SHIP1. When phosphorylated at Tyr-1357, interacts with INPPL1/SHIP2. Interacts with RANBP9 and RANBP10, as well as SPSB1, SPSB2, SPSB3 and SPSB4. SPSB1 binding occurs in the presence and in the absence of HGF, however HGF treatment has a positive effect on this interaction. Interacts with MUC20; prevents interaction with GRB2 and suppresses hepatocyte growth factor-induced cell proliferation. Interacts with GRB10. Interacts with PTPN1 and PTPN2. Interacts with HSP90AA1 and HSP90AB1; the interaction suppresses MET kinase activity. Interacts with tensin TNS3. Interacts (when phosphorylated) with tensin TNS4 (via SH2 domain); the interaction increases MET protein stability by inhibiting MET endocytosis and subsequent lysosomal degradation. In terms of processing, autophosphorylated in response to ligand binding on Tyr-1235 and Tyr-1236 in the kinase domain leading to further phosphorylation of Tyr-1350 and Tyr-1357 in the C-terminal multifunctional docking site. Dephosphorylated by PTPRJ at Tyr-1350 and Tyr-1366. Dephosphorylated by PTPN1 and PTPN2. Post-translationally, ubiquitinated. Ubiquitination by CBL regulates the receptor stability and activity through proteasomal degradation. O-mannosylation of IPT/TIG domains by TMEM260 is required for protein maturation. O-mannosylated residues are composed of single mannose glycans that are not elongated or modified.

The protein resides in the membrane. The catalysed reaction is L-tyrosyl-[protein] + ATP = O-phospho-L-tyrosyl-[protein] + ADP + H(+). Its activity is regulated as follows. In its inactive state, the C-terminal tail interacts with the catalytic domain and inhibits the kinase activity. Upon ligand binding, the C-terminal tail is displaced and becomes phosphorylated, thus increasing the kinase activity. Its function is as follows. Receptor tyrosine kinase that transduces signals from the extracellular matrix into the cytoplasm by binding to hepatocyte growth factor/HGF ligand. Regulates many physiological processes including proliferation, scattering, morphogenesis and survival. Ligand binding at the cell surface induces autophosphorylation of MET on its intracellular domain that provides docking sites for downstream signaling molecules. Following activation by ligand, interacts with the PI3-kinase subunit PIK3R1, PLCG1, SRC, GRB2, STAT3 or the adapter GAB1. Recruitment of these downstream effectors by MET leads to the activation of several signaling cascades including the RAS-ERK, PI3 kinase-AKT, or PLCgamma-PKC. The RAS-ERK activation is associated with the morphogenetic effects while PI3K/AKT coordinates prosurvival effects. During embryonic development, MET signaling plays a role in gastrulation, development and migration of muscles and neuronal precursors, angiogenesis and kidney formation. In adults, participates in wound healing as well as organ regeneration and tissue remodeling. Also promotes differentiation and proliferation of hematopoietic cells. This chain is Hepatocyte growth factor receptor (MET), found in Loxodonta africana (African elephant).